The sequence spans 583 residues: Aspartate--tRNA(Asp/Asn) ligase (583 aa).

Glu173 serves as a coordination point for L-aspartate. The aspartate stretch occupies residues 197–200; the sequence is QMFK. Residue Arg219 participates in L-aspartate binding. Residues 219 to 221 and Gln228 each bind ATP; that span reads RDE. Position 447 (His447) interacts with L-aspartate. Glu481 lines the ATP pocket. Residue Arg488 coordinates L-aspartate. Residue 533-536 coordinates ATP; that stretch reads GLDR.

Belongs to the class-II aminoacyl-tRNA synthetase family. Type 1 subfamily. In terms of assembly, homodimer.

Its subcellular location is the cytoplasm. The catalysed reaction is tRNA(Asx) + L-aspartate + ATP = L-aspartyl-tRNA(Asx) + AMP + diphosphate. In terms of biological role, aspartyl-tRNA synthetase with relaxed tRNA specificity since it is able to aspartylate not only its cognate tRNA(Asp) but also tRNA(Asn). Reaction proceeds in two steps: L-aspartate is first activated by ATP to form Asp-AMP and then transferred to the acceptor end of tRNA(Asp/Asn). In Elusimicrobium minutum (strain Pei191), this protein is Aspartate--tRNA(Asp/Asn) ligase.